Consider the following 625-residue polypeptide: tRNA uridine 5-carboxymethylaminomethyl modification enzyme MnmG (625 aa).

FAD contacts are provided by residues 13–18 (GGGHAG), valine 125, and serine 182. Residue 276–290 (GPRYCPSIEDKITRF) coordinates NAD(+). Glutamine 373 is an FAD binding site.

It belongs to the MnmG family. As to quaternary structure, homodimer. Heterotetramer of two MnmE and two MnmG subunits. The cofactor is FAD.

The protein resides in the cytoplasm. NAD-binding protein involved in the addition of a carboxymethylaminomethyl (cmnm) group at the wobble position (U34) of certain tRNAs, forming tRNA-cmnm(5)s(2)U34. The chain is tRNA uridine 5-carboxymethylaminomethyl modification enzyme MnmG from Lactococcus lactis subsp. cremoris (strain MG1363).